The chain runs to 60 residues: Large ribosomal subunit protein uL30 (60 aa).

The protein belongs to the universal ribosomal protein uL30 family. As to quaternary structure, part of the 50S ribosomal subunit.

In Paraburkholderia phytofirmans (strain DSM 17436 / LMG 22146 / PsJN) (Burkholderia phytofirmans), this protein is Large ribosomal subunit protein uL30.